The primary structure comprises 191 residues: Ferric nitrobindin-like protein (191 aa).

Residues 20 to 26 (GDWAGAG) carry the GXWXGXG motif.

Belongs to the nitrobindin family.

The sequence is that of Ferric nitrobindin-like protein from Streptomyces coelicolor (strain ATCC BAA-471 / A3(2) / M145).